We begin with the raw amino-acid sequence, 453 residues long: Secreted triacylglycerol lipase LIP3 (453 aa).

The first 19 residues, 1–19, serve as a signal peptide directing secretion; that stretch reads MKLGIVAFTLISFAAQALA. N98 is a glycosylation site (N-linked (GlcNAc...) asparagine). C115 and C284 are oxidised to a cystine. The active-site Nucleophile is S197. N230 is a glycosylation site (N-linked (GlcNAc...) asparagine). Catalysis depends on residues D344 and H378. C360 and C406 form a disulfide bridge.

This sequence belongs to the AB hydrolase superfamily. Lipase family. Class Lip subfamily.

The protein localises to the secreted. Its subcellular location is the cell wall. The catalysed reaction is a triacylglycerol + H2O = a diacylglycerol + a fatty acid + H(+). The enzyme catalyses a monoacylglycerol + H2O = glycerol + a fatty acid + H(+). It catalyses the reaction a diacylglycerol + H2O = a monoacylglycerol + a fatty acid + H(+). Functionally, secreted lipase involved in Dandruff and seborrheic dermatitis (D/SD) probably via lipase-mediated breakdown of sebaceous lipids and release of irritating free fatty acids. Has triacylglycerol lipase activity and is able to hydrolyze triolein, tristearin, trilinolein, tripalmitoylglycerol and trihexadecenoin. Hydrolyzes diacylglycerols such as distearin, dilinolein, dipalmitoylglycerol and dipalmitolein. Mostly converts monoolein to di- and triolein, while free fatty acids are only produced in low amounts. This Malassezia globosa (strain ATCC MYA-4612 / CBS 7966) (Dandruff-associated fungus) protein is Secreted triacylglycerol lipase LIP3.